Here is a 393-residue protein sequence, read N- to C-terminus: CCA-adding enzyme (393 aa).

Positions 27 and 30 each coordinate ATP. Residues G27 and R30 each contribute to the CTP site. Positions 40 and 42 each coordinate Mg(2+). Residues R111, D154, R157, R160, and R163 each contribute to the ATP site. CTP is bound by residues R111, D154, R157, R160, and R163.

It belongs to the tRNA nucleotidyltransferase/poly(A) polymerase family. Bacterial CCA-adding enzyme type 3 subfamily. Homodimer. Mg(2+) is required as a cofactor.

It catalyses the reaction a tRNA precursor + 2 CTP + ATP = a tRNA with a 3' CCA end + 3 diphosphate. The enzyme catalyses a tRNA with a 3' CCA end + 2 CTP + ATP = a tRNA with a 3' CCACCA end + 3 diphosphate. Catalyzes the addition and repair of the essential 3'-terminal CCA sequence in tRNAs without using a nucleic acid template. Adds these three nucleotides in the order of C, C, and A to the tRNA nucleotide-73, using CTP and ATP as substrates and producing inorganic pyrophosphate. tRNA 3'-terminal CCA addition is required both for tRNA processing and repair. Also involved in tRNA surveillance by mediating tandem CCA addition to generate a CCACCA at the 3' terminus of unstable tRNAs. While stable tRNAs receive only 3'-terminal CCA, unstable tRNAs are marked with CCACCA and rapidly degraded. The polypeptide is CCA-adding enzyme (Listeria monocytogenes serotype 4b (strain F2365)).